Here is a 153-residue protein sequence, read N- to C-terminus: Methylglyoxal synthase (153 aa).

Residues 3–153 form the MGS-like domain; that stretch reads DQVNRPKGVT…SYLSRDVPGN (151 aa). Substrate is bound by residues His19, Lys23, 45-48, and 65-66; these read TGTT and SG. Asp71 functions as the Proton donor/acceptor in the catalytic mechanism. Position 98 (His98) interacts with substrate.

It belongs to the methylglyoxal synthase family.

The enzyme catalyses dihydroxyacetone phosphate = methylglyoxal + phosphate. Its function is as follows. Catalyzes the formation of methylglyoxal from dihydroxyacetone phosphate. The protein is Methylglyoxal synthase of Hahella chejuensis (strain KCTC 2396).